Consider the following 319-residue polypeptide: Aspartate carbamoyltransferase catalytic subunit (319 aa).

Carbamoyl phosphate is bound by residues Arg-65 and Thr-66. Residue Lys-93 coordinates L-aspartate. Residues Arg-115, His-149, and Gln-152 each contribute to the carbamoyl phosphate site. 2 residues coordinate L-aspartate: Arg-182 and Arg-237. Carbamoyl phosphate contacts are provided by Gly-278 and Pro-279.

The protein belongs to the aspartate/ornithine carbamoyltransferase superfamily. ATCase family. In terms of assembly, heterododecamer (2C3:3R2) of six catalytic PyrB chains organized as two trimers (C3), and six regulatory PyrI chains organized as three dimers (R2).

It catalyses the reaction carbamoyl phosphate + L-aspartate = N-carbamoyl-L-aspartate + phosphate + H(+). It functions in the pathway pyrimidine metabolism; UMP biosynthesis via de novo pathway; (S)-dihydroorotate from bicarbonate: step 2/3. Catalyzes the condensation of carbamoyl phosphate and aspartate to form carbamoyl aspartate and inorganic phosphate, the committed step in the de novo pyrimidine nucleotide biosynthesis pathway. The chain is Aspartate carbamoyltransferase catalytic subunit from Janthinobacterium sp. (strain Marseille) (Minibacterium massiliensis).